Consider the following 229-residue polypeptide: Ribonuclease 3 (229 aa).

The 130-residue stretch at 4–133 (WEELQESVGF…FIGALYLDNG (130 aa)) folds into the RNase III domain. A Mg(2+)-binding site is contributed by glutamate 46. Aspartate 50 is an active-site residue. Positions 119 and 122 each coordinate Mg(2+). Glutamate 122 is a catalytic residue. A DRBM domain is found at 159–228 (DYKTQLQEIV…AQFAINQLTH (70 aa)).

The protein belongs to the ribonuclease III family. As to quaternary structure, homodimer. Mg(2+) serves as cofactor.

It is found in the cytoplasm. It catalyses the reaction Endonucleolytic cleavage to 5'-phosphomonoester.. Digests double-stranded RNA. Involved in the processing of primary rRNA transcript to yield the immediate precursors to the large and small rRNAs (23S and 16S). Processes some mRNAs, and tRNAs when they are encoded in the rRNA operon. Processes pre-crRNA and tracrRNA of type II CRISPR loci if present in the organism. This chain is Ribonuclease 3, found in Listeria innocua serovar 6a (strain ATCC BAA-680 / CLIP 11262).